The sequence spans 201 residues: MGNHLTEMAPTASSFLPHFQALHVVVIGLDSAGKTSLLYRLKFKEFVQSVPTKGFNTEKIRVPLGGSRGITFQVWDVGGQEKLRPLWRSYTRRTDGLVFVVDAAEAERLEEAKVELHRISRASDNQGVPVLVLANKQDQPGALSAAEVEKRLAVRELAAATLTHVQGCSAVDGLGLQQGLERLYEMILKRKKAARGGKKRR.

Gly-2 carries the N-myristoyl glycine lipid modification. GTP contacts are provided by residues 28 to 35 (GLDSAGKT), 76 to 80 (DVGGQ), and 135 to 138 (NKQD).

It belongs to the small GTPase superfamily. Arf family. In terms of assembly, interacts with CYTH2; the interaction is direct and ARL4D GTP-dependent. Does not interact with ARL4D.

Its subcellular location is the nucleus. It is found in the nucleolus. It localises to the cell membrane. The protein resides in the cytoplasm. Small GTP-binding protein which cycles between an inactive GDP-bound and an active GTP-bound form, and the rate of cycling is regulated by guanine nucleotide exchange factors (GEF) and GTPase-activating proteins (GAP). GTP-binding protein that does not act as an allosteric activator of the cholera toxin catalytic subunit. Recruits CYTH1, CYTH2, CYTH3 and CYTH4 to the plasma membrane in GDP-bound form. This is ADP-ribosylation factor-like protein 4D (ARL4D) from Homo sapiens (Human).